Consider the following 647-residue polypeptide: Beta-galactosidase (647 aa).

The signal sequence occupies residues 1–24 (MLRVPLCTPLPLLALLQLLGAAHG). Residues 25-29 (IYNVT) constitute a propeptide that is removed on maturation. Asn27 is a glycosylation site (N-linked (GlcNAc...) asparagine). Substrate contacts are provided by Tyr84, Glu130, and Asn188. The active-site Proton donor is Glu189. A disulfide bond links Cys196 and Cys231. An N-linked (GlcNAc...) asparagine glycan is attached at Asn248. The active-site Nucleophile is Glu269. Tyr334 is a substrate binding site. 6 N-linked (GlcNAc...) asparagine glycosylation sites follow: Asn500, Asn504, Asn510, Asn544, Asn557, and Asn617. Cys628 and Cys636 are oxidised to a cystine.

The protein belongs to the glycosyl hydrolase 35 family. As to quaternary structure, homodimer. May form higher multimers.

The protein localises to the lysosome. It carries out the reaction Hydrolysis of terminal non-reducing beta-D-galactose residues in beta-D-galactosides.. In terms of biological role, cleaves beta-linked terminal galactosyl residues from gangliosides, glycoproteins, and glycosaminoglycans. In Mus musculus (Mouse), this protein is Beta-galactosidase (Glb1).